A 447-amino-acid chain; its full sequence is N-succinylarginine dihydrolase (447 aa).

Substrate is bound by residues Ala19–Ser28, Asn110, and His137–Arg138. The active site involves Glu174. Substrate is bound at residue Arg213. Residue His249 is part of the active site. The substrate site is built by Asp251 and Asn364. Cys370 serves as the catalytic Nucleophile.

The protein belongs to the succinylarginine dihydrolase family. Homodimer.

The enzyme catalyses N(2)-succinyl-L-arginine + 2 H2O + 2 H(+) = N(2)-succinyl-L-ornithine + 2 NH4(+) + CO2. Its pathway is amino-acid degradation; L-arginine degradation via AST pathway; L-glutamate and succinate from L-arginine: step 2/5. Functionally, catalyzes the hydrolysis of N(2)-succinylarginine into N(2)-succinylornithine, ammonia and CO(2). This Yersinia pestis bv. Antiqua (strain Antiqua) protein is N-succinylarginine dihydrolase.